The primary structure comprises 720 residues: uncharacterized protein (720 aa).

G2 is lipidated: N-myristoyl glycine; by host.

This is an uncharacterized protein from Cryphonectria parasitica mycoreovirus 1 (strain 9B21) (CpMYRV-1).